The sequence spans 254 residues: Persulfide dioxygenase ETHE1, mitochondrial (254 aa).

A mitochondrion-targeting transit peptide spans 1 to 7 (MAGSVLK). S14 and S19 each carry phosphoserine. At K32 the chain carries N6-acetyllysine; alternate. K32 carries the post-translational modification N6-succinyllysine; alternate. K66 bears the N6-acetyllysine mark. Residues H79, H135, and D154 each coordinate Fe cation.

This sequence belongs to the metallo-beta-lactamase superfamily. Glyoxalase II family. Homodimer. Monomer. Interacts with TST. May interact with RELA. Requires Fe(2+) as cofactor.

It localises to the cytoplasm. The protein resides in the nucleus. It is found in the mitochondrion matrix. It catalyses the reaction S-sulfanylglutathione + O2 + H2O = sulfite + glutathione + 2 H(+). With respect to regulation, glutathione increases enzyme activity. In terms of biological role, sulfur dioxygenase that plays an essential role in hydrogen sulfide catabolism in the mitochondrial matrix. Hydrogen sulfide (H(2)S) is first oxidized by SQRDL, giving rise to cysteine persulfide residues. ETHE1 consumes molecular oxygen to catalyze the oxidation of the persulfide, once it has been transferred to a thiophilic acceptor, such as glutathione (R-SSH). Plays an important role in metabolic homeostasis in mitochondria by metabolizing hydrogen sulfide and preventing the accumulation of supraphysiological H(2)S levels that have toxic effects, due to the inhibition of cytochrome c oxidase. First described as a protein that can shuttle between the nucleus and the cytoplasm and suppress p53-induced apoptosis by sequestering the transcription factor RELA/NFKB3 in the cytoplasm and preventing its accumulation in the nucleus. This is Persulfide dioxygenase ETHE1, mitochondrial (ETHE1) from Bos taurus (Bovine).